Here is a 214-residue protein sequence, read N- to C-terminus: Probable septum site-determining protein MinC (214 aa).

Belongs to the MinC family. Interacts with MinD and FtsZ.

Functionally, cell division inhibitor that blocks the formation of polar Z ring septums. Rapidly oscillates between the poles of the cell to destabilize FtsZ filaments that have formed before they mature into polar Z rings. Prevents FtsZ polymerization. This Thermoanaerobacter pseudethanolicus (strain ATCC 33223 / 39E) (Clostridium thermohydrosulfuricum) protein is Probable septum site-determining protein MinC.